The chain runs to 687 residues: Cytochrome b/c1 (687 aa).

The chain crosses the membrane as a helical span at residues 46–66 (FGAILSFMLGMQILTGVILAM). Positions 96 and 110 each coordinate heme b. 2 helical membrane passes run 126 to 146 (VLWI…FMGY) and 160 to 180 (VITN…TLLW). Heme b contacts are provided by His-197 and His-211. 6 helical membrane-spanning segments follow: residues 199–219 (LLPF…HVAG), 247–267 (FGVA…PNYL), 305–325 (LAGV…PWLD), 337–357 (LAKQ…YLGA), 363–383 (IYVI…LIVL), and 410–430 (AVAS…GSLQ). The tract at residues 404–434 (LAKGGKAVASVAIALVAAGALFLGSLQDARA) is internal signal sequence. The Cytochrome c domain maps to 458–643 (GALQRGLKVY…TVAQYSKDVT (186 aa)). Residues Cys-471, Cys-474, His-475, and Met-616 each coordinate heme c. The helical transmembrane segment at 666 to 678 (VFLIIFAGLMYFT) threads the bilayer.

The protein belongs to the cytochrome b family. As to quaternary structure, the main subunits of complex b-c1 are: cytochrome b, cytochrome c1 and the Rieske protein. Heme b is required as a cofactor. Heme c serves as cofactor. In terms of processing, the protein is post-translationally processed into cytochrome b and c1. This occurs by processing between residues 434 and 435 without processing between cytochrome b and the N-terminal of the putative signal sequence domain.

Its subcellular location is the cell inner membrane. Its function is as follows. Component of the ubiquinol-cytochrome c reductase complex (complex III or cytochrome b-c1 complex), which is a respiratory chain that generates an electrochemical potential coupled to ATP synthesis. c1 functions as an electron donor to cytochrome c. In Bradyrhizobium diazoefficiens (strain JCM 10833 / BCRC 13528 / IAM 13628 / NBRC 14792 / USDA 110), this protein is Cytochrome b/c1 (fbcH).